We begin with the raw amino-acid sequence, 87 residues long: Neutrophil antibiotic peptide NP-3A (87 aa).

The first 19 residues, 1–19 (MRTLTLLTTLLLLALHTQA), serve as a signal peptide directing secretion. Positions 20 to 58 (ESPQGSTKEAPDEEQDISVFFGGDKGTALQDAAVKAGVT) are excised as a propeptide. Intrachain disulfides connect cysteine 59-cysteine 87, cysteine 61-cysteine 76, and cysteine 66-cysteine 86.

It belongs to the alpha-defensin family. As to expression, highest expression in bone marrow and to a much lesser extent in small intestine.

It is found in the secreted. In terms of biological role, active in vitro against S.aureus, fungi, Gram-positive and Gram-negative bacteria and to a lesser extent against an enveloped virus. This is Neutrophil antibiotic peptide NP-3A from Rattus norvegicus (Rat).